We begin with the raw amino-acid sequence, 139 residues long: Maximins 4/H3 type 6 (139 aa).

The N-terminal stretch at M1–A18 is a signal peptide. A propeptide spanning residues R19–R43 is cleaved from the precursor. Asparagine amide is present on N70. Residues T74–R118 constitute a propeptide that is removed on maturation. Isoleucine amide is present on I138.

This sequence belongs to the bombinin family. Expressed by the skin glands.

The protein localises to the secreted. In terms of biological role, maximin-4 shows antibacterial activity against both Gram-positive and Gram-negative bacteria. It also shows antimicrobial activity against the fungus C.albicans, but not against A.flavus nor P.uticale. It has little hemolytic activity. It does not possess a significant cytotoxicity against tumor cell lines. It does not possess a significant anti-HIV activity. Its function is as follows. Maximin-H3 shows antibacterial activity against both Gram-positive and Gram-negative bacteria. It also shows antimicrobial activity against the fungus C.albicans. Shows strong hemolytic activity. This chain is Maximins 4/H3 type 6, found in Bombina maxima (Giant fire-bellied toad).